Here is a 471-residue protein sequence, read N- to C-terminus: Ribulose bisphosphate carboxylase large chain (471 aa).

Substrate-binding residues include N115 and T165. K167 acts as the Proton acceptor in catalysis. K169 is a substrate binding site. K193, D195, and E196 together coordinate Mg(2+). K193 is modified (N6-carboxylysine). H286 (proton acceptor) is an active-site residue. R287, H319, and S371 together coordinate substrate.

The protein belongs to the RuBisCO large chain family. Type I subfamily. Heterohexadecamer of 8 large chains and 8 small chains. Requires Mg(2+) as cofactor.

The protein resides in the carboxysome. The enzyme catalyses 2 (2R)-3-phosphoglycerate + 2 H(+) = D-ribulose 1,5-bisphosphate + CO2 + H2O. It catalyses the reaction D-ribulose 1,5-bisphosphate + O2 = 2-phosphoglycolate + (2R)-3-phosphoglycerate + 2 H(+). RuBisCO catalyzes two reactions: the carboxylation of D-ribulose 1,5-bisphosphate, the primary event in carbon dioxide fixation, as well as the oxidative fragmentation of the pentose substrate in the photorespiration process. Both reactions occur simultaneously and in competition at the same active site. The polypeptide is Ribulose bisphosphate carboxylase large chain (Synechococcus sp. (strain CC9605)).